The following is a 62-amino-acid chain: Ribulose bisphosphate carboxylase/oxygenase activase, chloroplastic (62 aa).

The protein belongs to the RuBisCO activase family.

The protein localises to the plastid. The protein resides in the chloroplast stroma. Activation of RuBisCO (ribulose-1,5-bisphosphate carboxylase/oxygenase; EC 4.1.1.39) involves the ATP-dependent carboxylation of the epsilon-amino group of lysine leading to a carbamate structure. The chain is Ribulose bisphosphate carboxylase/oxygenase activase, chloroplastic from Vitis sp. (Grape).